The chain runs to 340 residues: Glucokinase (340 aa).

17–22 provides a ligand contact to ATP; that stretch reads GDIGGT.

Belongs to the bacterial glucokinase family.

It localises to the cytoplasm. The catalysed reaction is D-glucose + ATP = D-glucose 6-phosphate + ADP + H(+). In Allorhizobium ampelinum (strain ATCC BAA-846 / DSM 112012 / S4) (Agrobacterium vitis (strain S4)), this protein is Glucokinase.